Reading from the N-terminus, the 405-residue chain is DNA primase DnaG (405 aa).

Residues 172–248 (DSIIVVEGRA…HIDYIARAPP (77 aa)) enclose the Toprim domain. Mg(2+) is bound by residues glutamate 178, aspartate 222, and aspartate 224. Residues 279–302 (AAGEKTESQMSPQQPQLTQTQPTT) form a disordered region. The span at 290–302 (PQQPQLTQTQPTT) shows a compositional bias: low complexity.

It belongs to the archaeal DnaG primase family. In terms of assembly, forms a ternary complex with MCM helicase and DNA. Component of the archaeal exosome complex. It depends on Mg(2+) as a cofactor.

It catalyses the reaction ssDNA + n NTP = ssDNA/pppN(pN)n-1 hybrid + (n-1) diphosphate.. Its function is as follows. RNA polymerase that catalyzes the synthesis of short RNA molecules used as primers for DNA polymerase during DNA replication. Also part of the exosome, which is a complex involved in RNA degradation. Acts as a poly(A)-binding protein that enhances the interaction between heteromeric, adenine-rich transcripts and the exosome. The chain is DNA primase DnaG from Pyrobaculum islandicum (strain DSM 4184 / JCM 9189 / GEO3).